Here is a 578-residue protein sequence, read N- to C-terminus: Triokinase/FMN cyclase (578 aa).

The region spanning serine 9 to tryptophan 336 is the DhaK domain. Dihydroxyacetone is bound by residues glycine 56–histidine 59, lysine 109, and aspartate 114. The active-site Tele-hemiaminal-histidine intermediate is the histidine 221. Positions lysine 372–glutamate 571 constitute a DhaL domain. ATP contacts are provided by residues aspartate 401–cysteine 404, serine 446–serine 447, glycine 486, and threonine 494–methionine 495. Serine 511 and serine 545 each carry phosphoserine. Aspartate 556 to glycine 558 is an ATP binding site.

It belongs to the dihydroxyacetone kinase (DAK) family. In terms of assembly, homodimer. Interacts with IFIH1 (via the CARD domains), the interaction is inhibited by viral infection. It depends on Mg(2+) as a cofactor. Mn(2+) is required as a cofactor. The cofactor is Co(2+).

The enzyme catalyses dihydroxyacetone + ATP = dihydroxyacetone phosphate + ADP + H(+). The catalysed reaction is D-glyceraldehyde + ATP = D-glyceraldehyde 3-phosphate + ADP + H(+). It catalyses the reaction FAD = riboflavin cyclic-4',5'-phosphate + AMP + H(+). Each activity is inhibited by the substrate(s) of the other. Catalyzes both the phosphorylation of dihydroxyacetone and of glyceraldehyde, and the splitting of ribonucleoside diphosphate-X compounds among which FAD is the best substrate. Represses IFIH1-mediated cellular antiviral response. This is Triokinase/FMN cyclase (Tkfc) from Rattus norvegicus (Rat).